We begin with the raw amino-acid sequence, 1392 residues long: MSYSFTEKKRIRKSFAKRENVLEVPFLLATQIDSYAKFLQLENAFDKRTDDGLQAAFNSIFPIVSHNGYARLEFVHYTLGEPLFDIPECQLRGITYAAPLRARIRLVILDKEASKPTVKEVRENEVYMGEIPLMTPSGSFVINGTERVIVSQLHRSPGVFFEHDKGKTHSSGKLLFSARIIPYRGSWLDFEFDPKDLLYFRIDRRRKMPVTILLKALGYNNEQILDIFYDKETFYLSSNGVQTDLVAGRLKGETAKVDILDKEGNVLVAKGKRITAKNIRDITNAGLTRLDVEPESLLGKALAADLIDSETGEVLASANDEITEELLAKFDINGVKEITTLYINELDQGAYISNTLRTDETAGRQAARVAIYRMMRPGEPPTEEAVEQLFNRLFFSEDSYDLSRVGRMKFNTRTYEQKLSEAQQNSWYGRLLNETFAGAADKGGYVLSVEDIVASIATLVELRNGHGEVDDIDHLGNRRVRSVGELTENQFRSGLARVERAVKERLNQAESENLMPHDLINAKPVSAAIKEFFGSSQLSQFMDQTNPLSEVTHKRRVSALGPGGLTRERAGFEVRDVHPTHYGRVCPIETPEGPNIGLINSLSVYARTNDYGFLETPYRRVIDGKVTEEIDYLSAIEEGRYVIAQANADLDSDGNLIGDLVTCREKGETIMATPDRVQYMDVATGQVVSVAASLIPFLEHDDANRALMGANMQRQAVPCLRPEKPMVGTGIERSVAVDSATAIVARRGGVVEYVDANRVVVRVHDDEATAGEVGVDIYNLVKFTRSNQSTNINQRPAVKAGDVLQRGDLVADGASTDLGELALGQNMTIAFMPWNGYNYEDSILISEKVAADDRYTSIHIEELNVVARDTKLGAEDITRDIPNLSERMQNRLDESGIVYIGAEVEAGDVLVGKVTPKGETQLTPEEKLLRAIFGEKASDVKDTSLRMPTGMSGTVIDVQVFTREGIQRDKRAQSIIDSELKRYRLDLNDQLRIFDNDAFDRIERMIVGQKANGGPMKLAKGSEITTEYLAGLPSRHDWFDIRLTDEDLAKQLELIKVSLQQKREEADELYEIKKKKLTQGDELQPGVQKMVKVFIAIKRRLQAGDKMAGRHGNKGVVSRILPVEDMPYMADGRPVDIVLNPLGVPSRMNIGQILEVHLGWAAKGIGERIDRMLKEQRKAGELREFLNRLYNGSGKKEDLDALTDEEIIELASNLRKGASFASPVFDGAKESEIREMLNLAYPSDDPEVEKLGFNDSKTQITLYDGRSGEAFDRKVTVGVMHYLKLHHLVDEKMHARSTGPYSLVTQQPLGGKAQFGGQRFGEMEVWALEAYGAAYTLQEMLTVKSDDVNGRTKMYENIVKGEHKIDAGMPESFNVLVKEIRSLGLDIDLERY.

This sequence belongs to the RNA polymerase beta chain family. The RNAP catalytic core consists of 2 alpha, 1 beta, 1 beta' and 1 omega subunit. When a sigma factor is associated with the core the holoenzyme is formed, which can initiate transcription.

The catalysed reaction is RNA(n) + a ribonucleoside 5'-triphosphate = RNA(n+1) + diphosphate. Its function is as follows. DNA-dependent RNA polymerase catalyzes the transcription of DNA into RNA using the four ribonucleoside triphosphates as substrates. This Neisseria meningitidis serogroup A / serotype 4A (strain DSM 15465 / Z2491) protein is DNA-directed RNA polymerase subunit beta.